Reading from the N-terminus, the 397-residue chain is Tryptophan synthase beta chain (397 aa).

K87 is modified (N6-(pyridoxal phosphate)lysine).

It belongs to the TrpB family. Tetramer of two alpha and two beta chains. The cofactor is pyridoxal 5'-phosphate.

It catalyses the reaction (1S,2R)-1-C-(indol-3-yl)glycerol 3-phosphate + L-serine = D-glyceraldehyde 3-phosphate + L-tryptophan + H2O. It functions in the pathway amino-acid biosynthesis; L-tryptophan biosynthesis; L-tryptophan from chorismate: step 5/5. Functionally, the beta subunit is responsible for the synthesis of L-tryptophan from indole and L-serine. In Salmonella choleraesuis (strain SC-B67), this protein is Tryptophan synthase beta chain.